The sequence spans 156 residues: ATP synthase subunit b (156 aa).

A helical transmembrane segment spans residues 5 to 25 (LTLIGQAIAFAIFVAFCMKFV).

This sequence belongs to the ATPase B chain family. As to quaternary structure, F-type ATPases have 2 components, F(1) - the catalytic core - and F(0) - the membrane proton channel. F(1) has five subunits: alpha(3), beta(3), gamma(1), delta(1), epsilon(1). F(0) has three main subunits: a(1), b(2) and c(10-14). The alpha and beta chains form an alternating ring which encloses part of the gamma chain. F(1) is attached to F(0) by a central stalk formed by the gamma and epsilon chains, while a peripheral stalk is formed by the delta and b chains.

It localises to the cell inner membrane. F(1)F(0) ATP synthase produces ATP from ADP in the presence of a proton or sodium gradient. F-type ATPases consist of two structural domains, F(1) containing the extramembraneous catalytic core and F(0) containing the membrane proton channel, linked together by a central stalk and a peripheral stalk. During catalysis, ATP synthesis in the catalytic domain of F(1) is coupled via a rotary mechanism of the central stalk subunits to proton translocation. Its function is as follows. Component of the F(0) channel, it forms part of the peripheral stalk, linking F(1) to F(0). The chain is ATP synthase subunit b from Acinetobacter baylyi (strain ATCC 33305 / BD413 / ADP1).